The sequence spans 356 residues: Tyrosine recombinase XerS (356 aa).

The Core-binding (CB) domain occupies 16-121; the sequence is VMPPYVLEYY…ALSSLYKYLT (106 aa). The Tyr recombinase domain maps to 169 to 354; the sequence is GFLDYIDSEY…INEEQKNALD (186 aa). Active-site residues include R210, K234, H306, R309, and H332. The active-site O-(3'-phospho-DNA)-tyrosine intermediate is the Y341.

Belongs to the 'phage' integrase family. XerS subfamily.

It localises to the cytoplasm. With respect to regulation, ftsK is required for recombination. Functionally, site-specific tyrosine recombinase, which acts by catalyzing the cutting and rejoining of the recombining DNA molecules. Essential to convert dimers of the bacterial chromosome into monomers to permit their segregation at cell division. In Lactococcus lactis subsp. cremoris (strain SK11), this protein is Tyrosine recombinase XerS.